The sequence spans 72 residues: Conotoxin VnMKLT2-021 (72 aa).

The N-terminal stretch at 1-22 is a signal peptide; sequence MKLTCVLIVAVLFLTACQLTTA. A propeptide spanning residues 23–45 is cleaved from the precursor; sequence ASYARSEREHPDLGSSDQNSKLT. Positions 25 to 44 are disordered; it reads YARSEREHPDLGSSDQNSKL. 3 disulfide bridges follow: Cys-48-Cys-62, Cys-55-Cys-66, and Cys-61-Cys-71.

It belongs to the conotoxin O1 superfamily. Expressed by the venom duct.

The protein resides in the secreted. This Conus ventricosus (Mediterranean cone) protein is Conotoxin VnMKLT2-021.